The chain runs to 63 residues: U-reduvitoxin-Pr4a (63 aa).

The first 19 residues, 1–19 (MKIFGLFLLIATYMALAFA), serve as a signal peptide directing secretion. 3 cysteine pairs are disulfide-bonded: C24–C40, C31–C45, and C39–C52.

It belongs to the venom Ptu1-like knottin family. Expressed by the venom gland.

The protein localises to the secreted. Functionally, binds reversibly and blocks P/Q-type voltage-gated calcium channels (Cav). This is U-reduvitoxin-Pr4a from Platymeris rhadamanthus (Red spot assassin bug).